We begin with the raw amino-acid sequence, 390 residues long: Putative nickel insertion protein (390 aa).

It belongs to the LarC family.

This Geobacter metallireducens (strain ATCC 53774 / DSM 7210 / GS-15) protein is Putative nickel insertion protein.